The primary structure comprises 408 residues: AA9 family lytic polysaccharide monooxygenase A (408 aa).

The signal sequence occupies residues 1 to 20 (MKTTTYSLLALAAASKLASA). Positions 21 and 103 each coordinate Cu(2+). Residues Cys-63 and Cys-186 are joined by a disulfide bond. A glycan (N-linked (GlcNAc...) asparagine) is linked at Asn-151. An O2-binding site is contributed by His-172. Tyr-183 contributes to the Cu(2+) binding site. Asn-331 and Asn-381 each carry an N-linked (GlcNAc...) asparagine glycan. One can recognise a CBM1 domain in the interval 369 to 405 (GVAKQYERCGGINHTGPTTCESGSVCKKWNPYYYQCV).

It belongs to the polysaccharide monooxygenase AA9 family. Requires Cu(2+) as cofactor.

The protein localises to the secreted. It carries out the reaction [(1-&gt;4)-beta-D-glucosyl]n+m + reduced acceptor + O2 = 4-dehydro-beta-D-glucosyl-[(1-&gt;4)-beta-D-glucosyl]n-1 + [(1-&gt;4)-beta-D-glucosyl]m + acceptor + H2O.. In terms of biological role, lytic polysaccharide monooxygenase (LPMO) that depolymerizes crystalline and amorphous polysaccharides via the oxidation of scissile alpha- or beta-(1-4)-glycosidic bonds, yielding C4 oxidation products. Catalysis by LPMOs requires the reduction of the active-site copper from Cu(II) to Cu(I) by a reducing agent and H(2)O(2) or O(2) as a cosubstrate. The sequence is that of AA9 family lytic polysaccharide monooxygenase A (eglD) from Aspergillus kawachii (strain NBRC 4308) (White koji mold).